Consider the following 431-residue polypeptide: Histidinol dehydrogenase (431 aa).

NAD(+) contacts are provided by tyrosine 124, glutamine 187, and asparagine 210. 3 residues coordinate substrate: serine 236, glutamine 258, and histidine 261. Positions 258 and 261 each coordinate Zn(2+). Residues glutamate 325 and histidine 326 each act as proton acceptor in the active site. Histidine 326, aspartate 359, glutamate 413, and histidine 418 together coordinate substrate. Residue aspartate 359 participates in Zn(2+) binding. Residue histidine 418 coordinates Zn(2+).

Belongs to the histidinol dehydrogenase family. It depends on Zn(2+) as a cofactor.

It catalyses the reaction L-histidinol + 2 NAD(+) + H2O = L-histidine + 2 NADH + 3 H(+). It participates in amino-acid biosynthesis; L-histidine biosynthesis; L-histidine from 5-phospho-alpha-D-ribose 1-diphosphate: step 9/9. Catalyzes the sequential NAD-dependent oxidations of L-histidinol to L-histidinaldehyde and then to L-histidine. The protein is Histidinol dehydrogenase of Legionella pneumophila subsp. pneumophila (strain Philadelphia 1 / ATCC 33152 / DSM 7513).